Reading from the N-terminus, the 235-residue chain is Coiled-coil domain-containing protein 71L (235 aa).

Basic residues predominate over residues 1 to 13 (MRRSMKRRRRRRP). Residues 1–30 (MRRSMKRRRRRRPVAPATAARGGDFRAEDG) are disordered. Phosphoserine occurs at positions 52 and 89. The segment at 109-167 (PDPPGPPTARGQARRPVPRAAARRRRRGARAAAARRRKPRPPPPPPPPPEESCPAKPVA) is disordered. The segment covering 120–148 (QARRPVPRAAARRRRRGARAAAARRRKPR) has biased composition (basic residues). Pro residues predominate over residues 149–159 (PPPPPPPPPEE). T185 bears the Phosphothreonine mark. S198 carries the post-translational modification Phosphoserine.

The sequence is that of Coiled-coil domain-containing protein 71L (CCDC71L) from Homo sapiens (Human).